A 270-amino-acid chain; its full sequence is 5'-AMP-activated protein kinase subunit beta-1 (270 aa).

Positions 1–43 are disordered; that stretch reads MGNTSSERAALERQAGHKTPRRDSSGGTKDGDRPKILMDSPED. A lipid anchor (N-myristoyl glycine) is attached at Gly-2. Thr-4 bears the Phosphothreonine mark. Residues Ser-5 and Ser-6 each carry the phosphoserine modification. A compositionally biased stretch (basic and acidic residues) spans 9-36; the sequence is AALERQAGHKTPRRDSSGGTKDGDRPKI. Residue Thr-19 is modified to Phosphothreonine. Ser-24 and Ser-25 each carry phosphoserine; by autocatalysis. A phosphoserine mark is found at Ser-40, Ser-96, and Ser-101. Positions 68–163 are glycogen-binding domain; sequence EVNEKAPAQA…QVKKTDFEVF (96 aa). A Phosphoserine; by autocatalysis modification is found at Ser-108. Position 148 is a phosphothreonine (Thr-148). Position 182 is a phosphoserine (Ser-182). N6-succinyllysine is present on Lys-201.

Belongs to the 5'-AMP-activated protein kinase beta subunit family. AMPK is a heterotrimer of an alpha catalytic subunit (PRKAA1 or PRKAA2), a beta (PRKAB1 or PRKAB2) and a gamma non-catalytic subunits (PRKAG1, PRKAG2 or PRKAG3). Interacts with FNIP1 and FNIP2. In terms of processing, phosphorylated when associated with the catalytic subunit (PRKAA1 or PRKAA2). Phosphorylated by ULK1; leading to negatively regulate AMPK activity and suggesting the existence of a regulatory feedback loop between ULK1 and AMPK. Highly expressed in kidney, heart, white adipose tissue, lung and spleen.

Its function is as follows. Non-catalytic subunit of AMP-activated protein kinase (AMPK), an energy sensor protein kinase that plays a key role in regulating cellular energy metabolism. In response to reduction of intracellular ATP levels, AMPK activates energy-producing pathways and inhibits energy-consuming processes: inhibits protein, carbohydrate and lipid biosynthesis, as well as cell growth and proliferation. AMPK acts via direct phosphorylation of metabolic enzymes, and by longer-term effects via phosphorylation of transcription regulators. Also acts as a regulator of cellular polarity by remodeling the actin cytoskeleton; probably by indirectly activating myosin. Beta non-catalytic subunit acts as a scaffold on which the AMPK complex assembles, via its C-terminus that bridges alpha (PRKAA1 or PRKAA2) and gamma subunits (PRKAG1, PRKAG2 or PRKAG3). The sequence is that of 5'-AMP-activated protein kinase subunit beta-1 (Prkab1) from Rattus norvegicus (Rat).